Consider the following 530-residue polypeptide: ATP synthase subunit alpha (530 aa).

Position 172–179 (172–179 (GDRQTGKT)) interacts with ATP.

It belongs to the ATPase alpha/beta chains family. As to quaternary structure, F-type ATPases have 2 components, CF(1) - the catalytic core - and CF(0) - the membrane proton channel. CF(1) has five subunits: alpha(3), beta(3), gamma(1), delta(1), epsilon(1). CF(0) has three main subunits: a(1), b(2) and c(9-12). The alpha and beta chains form an alternating ring which encloses part of the gamma chain. CF(1) is attached to CF(0) by a central stalk formed by the gamma and epsilon chains, while a peripheral stalk is formed by the delta and b chains.

It is found in the cell inner membrane. It catalyses the reaction ATP + H2O + 4 H(+)(in) = ADP + phosphate + 5 H(+)(out). Functionally, produces ATP from ADP in the presence of a proton gradient across the membrane. The alpha chain is a regulatory subunit. In Phocaeicola vulgatus (strain ATCC 8482 / DSM 1447 / JCM 5826 / CCUG 4940 / NBRC 14291 / NCTC 11154) (Bacteroides vulgatus), this protein is ATP synthase subunit alpha.